The chain runs to 127 residues: Glycine cleavage system H protein (127 aa).

A Lipoyl-binding domain is found at Thr24–Lys105. Position 65 is an N6-lipoyllysine (Lys65).

It belongs to the GcvH family. In terms of assembly, the glycine cleavage system is composed of four proteins: P, T, L and H. (R)-lipoate serves as cofactor.

Its function is as follows. The glycine cleavage system catalyzes the degradation of glycine. The H protein shuttles the methylamine group of glycine from the P protein to the T protein. This Pelodictyon phaeoclathratiforme (strain DSM 5477 / BU-1) protein is Glycine cleavage system H protein.